A 61-amino-acid chain; its full sequence is MAKKALILKAAAKPKFSVRAYTRCQRCGRPKAVYRKFGLCRVCIREMAHRGELPGVSKASW.

Zn(2+) is bound by residues cysteine 24, cysteine 27, cysteine 40, and cysteine 43.

Belongs to the universal ribosomal protein uS14 family. Zinc-binding uS14 subfamily. In terms of assembly, part of the 30S ribosomal subunit. Contacts proteins S3 and S10. The cofactor is Zn(2+).

Its function is as follows. Binds 16S rRNA, required for the assembly of 30S particles and may also be responsible for determining the conformation of the 16S rRNA at the A site. This Salinispora arenicola (strain CNS-205) protein is Small ribosomal subunit protein uS14B.